The following is a 90-amino-acid chain: Cell division topological specificity factor (90 aa).

Belongs to the MinE family.

In terms of biological role, prevents the cell division inhibition by proteins MinC and MinD at internal division sites while permitting inhibition at polar sites. This ensures cell division at the proper site by restricting the formation of a division septum at the midpoint of the long axis of the cell. This Pelotomaculum thermopropionicum (strain DSM 13744 / JCM 10971 / SI) protein is Cell division topological specificity factor.